Consider the following 230-residue polypeptide: MSERAPVVTIDGPSGAGKGTISQLLAQHLGWQLLDSGAIYRVLALAAIHHDVELENEESITLLAAHLDVKFLTGNDKDPVQVILEGEDVTTDIRTQECSNAASKVAAFPRVREALLRRQRAFRTAPGLIADGRDMGTVVFPTAPAKLYLTASAEERAQRRYNQLQDKGFDVNIERLLSEIIERDERDMNRPVAPLVPAEDAFVIDTSGKGIDEVLELALKHINEKLSSAN.

Residue 12-20 (GPSGAGKGT) coordinates ATP.

This sequence belongs to the cytidylate kinase family. Type 1 subfamily.

It is found in the cytoplasm. It carries out the reaction CMP + ATP = CDP + ADP. The enzyme catalyses dCMP + ATP = dCDP + ADP. This is Cytidylate kinase from Shewanella sp. (strain W3-18-1).